The primary structure comprises 183 residues: uncharacterized protein (183 aa).

The segment at 1-36 (MAKRGNKKKQEAPLSLGKHTVGGRVGKPTNAKTGSA) is disordered. The 75-residue stretch at 100-174 (TNVVIENLAP…FKLSCYIKKN (75 aa)) folds into the RRM domain.

It is found in the nucleus. The protein localises to the nucleolus. This is an uncharacterized protein from Schizosaccharomyces pombe (strain 972 / ATCC 24843) (Fission yeast).